Consider the following 178-residue polypeptide: Heavy metal-associated isoprenylated plant protein 30 (178 aa).

The region spanning 45-108 (LQTIDLKVRM…AVRRAGKRAE (64 aa)) is the HMA domain. A metal cation-binding residues include Cys-56 and Cys-59. A Cysteine methyl ester modification is found at Cys-175. Cys-175 carries the S-farnesyl cysteine lipid modification. Residues 176 to 178 (SLM) constitute a propeptide, removed in mature form.

Belongs to the HIPP family. Interacts with ZHD3/HB21, ZHD11/HB29 and ZHD8/HB30.

In terms of biological role, heavy-metal-binding protein. The sequence is that of Heavy metal-associated isoprenylated plant protein 30 from Arabidopsis thaliana (Mouse-ear cress).